Consider the following 319-residue polypeptide: Carbonic anhydrase, chloroplastic (319 aa).

Residues 1–98 (MSTINGCLTS…AASKVAQITS (98 aa)) constitute a chloroplast transit peptide.

It belongs to the beta-class carbonic anhydrase family. In terms of assembly, homohexamer.

The protein localises to the plastid. It localises to the chloroplast stroma. It carries out the reaction hydrogencarbonate + H(+) = CO2 + H2O. Its function is as follows. Reversible hydration of carbon dioxide. The protein is Carbonic anhydrase, chloroplastic of Spinacia oleracea (Spinach).